Reading from the N-terminus, the 860-residue chain is Alanine--tRNA ligase (860 aa).

Zn(2+) is bound by residues histidine 553, histidine 557, cysteine 655, and histidine 659.

This sequence belongs to the class-II aminoacyl-tRNA synthetase family. Requires Zn(2+) as cofactor.

Its subcellular location is the cytoplasm. It carries out the reaction tRNA(Ala) + L-alanine + ATP = L-alanyl-tRNA(Ala) + AMP + diphosphate. Functionally, catalyzes the attachment of alanine to tRNA(Ala) in a two-step reaction: alanine is first activated by ATP to form Ala-AMP and then transferred to the acceptor end of tRNA(Ala). Also edits incorrectly charged Ser-tRNA(Ala) and Gly-tRNA(Ala) via its editing domain. This is Alanine--tRNA ligase from Legionella pneumophila (strain Lens).